Here is a 327-residue protein sequence, read N- to C-terminus: Biotin synthase (327 aa).

Residues 49–273 (FNKDKIDLCS…ICIARIALPD (225 aa)) enclose the Radical SAM core domain. Residues Cys67, Cys71, and Cys74 each coordinate [4Fe-4S] cluster. [2Fe-2S] cluster-binding residues include Ser110, Cys142, Cys201, and Arg277.

The protein belongs to the radical SAM superfamily. Biotin synthase family. As to quaternary structure, homodimer. The cofactor is [4Fe-4S] cluster. [2Fe-2S] cluster is required as a cofactor.

The enzyme catalyses (4R,5S)-dethiobiotin + (sulfur carrier)-SH + 2 reduced [2Fe-2S]-[ferredoxin] + 2 S-adenosyl-L-methionine = (sulfur carrier)-H + biotin + 2 5'-deoxyadenosine + 2 L-methionine + 2 oxidized [2Fe-2S]-[ferredoxin]. Its pathway is cofactor biosynthesis; biotin biosynthesis; biotin from 7,8-diaminononanoate: step 2/2. Catalyzes the conversion of dethiobiotin (DTB) to biotin by the insertion of a sulfur atom into dethiobiotin via a radical-based mechanism. This is Biotin synthase from Methanococcus maripaludis (strain C6 / ATCC BAA-1332).